A 156-amino-acid polypeptide reads, in one-letter code: MANSHKTDDLDHFDLKILEALSEDGRMSVLQLSKRVGLSKTPCQTRLKRLVDEGYILGFRAVLNPQKLGVDHIAFAEVKLSDTREKALEEFNTAVRKIKEVEECHMIAGAFDYLLKVRTSDIRKYRRVLGEKISSLPSVSNTSTFVVMQSVKETGI.

The HTH asnC-type domain maps to 10 to 71; that stretch reads LDHFDLKILE…VLNPQKLGVD (62 aa). Residues 29–48 constitute a DNA-binding region (H-T-H motif); it reads VLQLSKRVGLSKTPCQTRLK.

In terms of biological role, transcriptional activator of the putA gene in response to proline. This chain is Proline dehydrogenase transcriptional activator (putR), found in Rhizobium radiobacter (Agrobacterium tumefaciens).